A 121-amino-acid chain; its full sequence is Protein CHLORORESPIRATORY REDUCTION 42, chloroplastic (121 aa).

In terms of assembly, biogenesis factor component of the plastidial NDH subcomplex A.

Its subcellular location is the plastid. It localises to the chloroplast. It is found in the chloroplast stroma. Functionally, required for both formation and activity of the chloroplast NAD(P)H dehydrogenase (NDH) complex of the photosynthetic electron transport chain. Functions in assembly or stabilization of the NDH complex; probably involved, together with CRR1 and CRR6, in the incorporation of NdhJ, NdhM, NdhK and NdhI into the NDH subcomplex A assembly intermediate (NAI500) to produce the complex NAI400. The sequence is that of Protein CHLORORESPIRATORY REDUCTION 42, chloroplastic from Arabidopsis thaliana (Mouse-ear cress).